A 159-amino-acid chain; its full sequence is Phosphopantetheine adenylyltransferase (159 aa).

Thr-10 is a binding site for substrate. Residues 10 to 11 (TF) and His-18 each bind ATP. 3 residues coordinate substrate: Lys-42, Met-74, and Arg-88. ATP-binding positions include 89-91 (GLR), Glu-99, and 124-130 (WSFISSS).

This sequence belongs to the bacterial CoaD family. In terms of assembly, homohexamer. Mg(2+) serves as cofactor.

It is found in the cytoplasm. It catalyses the reaction (R)-4'-phosphopantetheine + ATP + H(+) = 3'-dephospho-CoA + diphosphate. It functions in the pathway cofactor biosynthesis; coenzyme A biosynthesis; CoA from (R)-pantothenate: step 4/5. Functionally, reversibly transfers an adenylyl group from ATP to 4'-phosphopantetheine, yielding dephospho-CoA (dPCoA) and pyrophosphate. This is Phosphopantetheine adenylyltransferase from Shigella dysenteriae serotype 1 (strain Sd197).